The chain runs to 72 residues: Translation initiation factor IF-1 (72 aa).

Residues 1–72 (MSKDDVIEMQ…TRGRITWRAK (72 aa)) enclose the S1-like domain.

This sequence belongs to the IF-1 family. As to quaternary structure, component of the 30S ribosomal translation pre-initiation complex which assembles on the 30S ribosome in the order IF-2 and IF-3, IF-1 and N-formylmethionyl-tRNA(fMet); mRNA recruitment can occur at any time during PIC assembly.

It localises to the cytoplasm. Its function is as follows. One of the essential components for the initiation of protein synthesis. Stabilizes the binding of IF-2 and IF-3 on the 30S subunit to which N-formylmethionyl-tRNA(fMet) subsequently binds. Helps modulate mRNA selection, yielding the 30S pre-initiation complex (PIC). Upon addition of the 50S ribosomal subunit IF-1, IF-2 and IF-3 are released leaving the mature 70S translation initiation complex. The polypeptide is Translation initiation factor IF-1 (Clostridium beijerinckii (strain ATCC 51743 / NCIMB 8052) (Clostridium acetobutylicum)).